Reading from the N-terminus, the 131-residue chain is Small ribosomal subunit protein uS8 (131 aa).

This sequence belongs to the universal ribosomal protein uS8 family. As to quaternary structure, part of the 30S ribosomal subunit. Contacts proteins S5 and S12.

Its function is as follows. One of the primary rRNA binding proteins, it binds directly to 16S rRNA central domain where it helps coordinate assembly of the platform of the 30S subunit. This is Small ribosomal subunit protein uS8 from Pelodictyon phaeoclathratiforme (strain DSM 5477 / BU-1).